A 308-amino-acid polypeptide reads, in one-letter code: Ferrochelatase (308 aa).

Residues His167 and Glu239 each coordinate Fe cation.

This sequence belongs to the ferrochelatase family.

It localises to the cytoplasm. It carries out the reaction heme b + 2 H(+) = protoporphyrin IX + Fe(2+). It functions in the pathway porphyrin-containing compound metabolism; protoheme biosynthesis; protoheme from protoporphyrin-IX: step 1/1. Functionally, catalyzes the ferrous insertion into protoporphyrin IX. This chain is Ferrochelatase, found in Thermoplasma acidophilum (strain ATCC 25905 / DSM 1728 / JCM 9062 / NBRC 15155 / AMRC-C165).